We begin with the raw amino-acid sequence, 997 residues long: Translation initiation factor IF-2 (997 aa).

The disordered stretch occupies residues 36-415; it reads SMAGSLTTEE…ATQPLKAAKR (380 aa). 2 stretches are compositionally biased toward basic and acidic residues: residues 45–65 and 94–107; these read EAAR…ERSG and AREE…EKPA. Positions 108-126 are enriched in low complexity; it reads AVEAPAQAEPVAEAPAASP. Over residues 127-147 the composition is skewed to basic and acidic residues; the sequence is HKVEEKAAPEAAKAEPAEKAK. Residues 151–162 show a composition bias toward low complexity; sequence ARVVSAARVISR. Residues 163–181 are compositionally biased toward basic and acidic residues; the sequence is PGEEEEKKPEPVVESKPEP. Low complexity predominate over residues 182-196; it reads VAEISPVAAALAARE. Composition is skewed to basic and acidic residues over residues 197–214 and 241–252; these read AAAR…EKGA and PEARTEAWKDAD. Gly residues predominate over residues 300–309; that stretch reads GRPGAPGGPR. Residues 316 to 335 are compositionally biased toward pro residues; it reads PPRPGGPRPSGPGGPRPAGG. Positions 378–388 are enriched in basic and acidic residues; it reads GGRRDDDDSQR. Positions 390-399 are enriched in basic residues; the sequence is NRGKGRRKGG. The 170-residue stretch at 496–665 folds into the tr-type G domain; sequence PRPPVVTIMG…ALQSEIMELK (170 aa). Residues 505–512 form a G1 region; that stretch reads GHVDHGKT. 505–512 is a GTP binding site; the sequence is GHVDHGKT. Residues 530-534 form a G2 region; sequence GITQH. The tract at residues 551–554 is G3; that stretch reads DTPG. GTP is bound by residues 551–555 and 605–608; these read DTPGH and NKMD. The segment at 605-608 is G4; it reads NKMD. Positions 641-643 are G5; that stretch reads AAK.

Belongs to the TRAFAC class translation factor GTPase superfamily. Classic translation factor GTPase family. IF-2 subfamily.

It localises to the cytoplasm. In terms of biological role, one of the essential components for the initiation of protein synthesis. Protects formylmethionyl-tRNA from spontaneous hydrolysis and promotes its binding to the 30S ribosomal subunits. Also involved in the hydrolysis of GTP during the formation of the 70S ribosomal complex. The sequence is that of Translation initiation factor IF-2 from Desulfovibrio desulfuricans (strain ATCC 27774 / DSM 6949 / MB).